A 100-amino-acid chain; its full sequence is Integration host factor subunit beta (100 aa).

A disordered region spans residues 81–100 (KPGKELRDRVNEDEHEEAHT). Over residues 82 to 100 (PGKELRDRVNEDEHEEAHT) the composition is skewed to basic and acidic residues.

The protein belongs to the bacterial histone-like protein family. Heterodimer of an alpha and a beta chain.

This protein is one of the two subunits of integration host factor, a specific DNA-binding protein that functions in genetic recombination as well as in transcriptional and translational control. The chain is Integration host factor subunit beta (ihfB) from Pseudomonas putida (Arthrobacter siderocapsulatus).